A 369-amino-acid chain; its full sequence is Core-capsid bridging protein (369 aa).

Positions Ala15–Asp50 are disordered. Residues Pro22–Pro31 show a composition bias toward basic and acidic residues. Over residues Arg32 to Lys41 the composition is skewed to basic residues. At Thr85 the chain carries Phosphothreonine; by host. Ser166 bears the Phosphoserine; by host mark. The interval Pro307–Ala342 is disordered. A compositionally biased stretch (basic residues) spans Arg315–Gln338.

The protein belongs to the adenoviridae core-capsid bridging protein family. As to quaternary structure, monomer. Homodimer. Exists in equilibrium between monomers and dimers in solution. Interacts with the histone-like nucleoprotein; this interactions bridge the virus core to the capsid. Interacts with core protein X; this interactions bridge the virus core to the capsid. Interacts with the endosome lysis protein VI; this interactions bridge the virus core to the capsid. Interacts with the peripentonal hexons. Interacts with host NPM1; this interaction might play a role in virus assembly.

Its subcellular location is the virion. It localises to the host nucleus. The protein localises to the host nucleolus. Functionally, associates loosely with the viral DNA to form an outer shell around the nucleoprotein-DNA complex and links it with the capsid by binding the endosome lysis protein. Dissociates from the viral genome during entry. Might be involved in nuclear capsid assembly of the viral particles through its association with NPM1/nucleophosmin. The sequence is that of Core-capsid bridging protein from Homo sapiens (Human).